The primary structure comprises 348 residues: Major outer membrane protein P.IB (348 aa).

A signal peptide spans 1–19 (MKKSLIALTLAALPVAAMA).

It belongs to the Gram-negative porin family. Homotrimer.

Its subcellular location is the cell outer membrane. Its function is as follows. Serves as a slightly cation selective porin. Major antigen on the gonococcal cell surface and it may have pathogenic properties in addition to its porin activity. This chain is Major outer membrane protein P.IB (porB), found in Neisseria gonorrhoeae.